The sequence spans 376 residues: PCM7-4 (376 aa).

Its function is as follows. Has antibacterial activity against Listeria monocytogenes. This is PCM7-4 from Bacillus velezensis.